Reading from the N-terminus, the 365-residue chain is tRNA/tmRNA (uracil-C(5))-methyltransferase (365 aa).

The S-adenosyl-L-methionine site is built by Gln-189, Tyr-217, Asn-222, Glu-238, and Asp-298. Cys-323 serves as the catalytic Nucleophile. Glu-357 acts as the Proton acceptor in catalysis.

Belongs to the class I-like SAM-binding methyltransferase superfamily. RNA M5U methyltransferase family. TrmA subfamily.

It catalyses the reaction uridine(54) in tRNA + S-adenosyl-L-methionine = 5-methyluridine(54) in tRNA + S-adenosyl-L-homocysteine + H(+). The enzyme catalyses uridine(341) in tmRNA + S-adenosyl-L-methionine = 5-methyluridine(341) in tmRNA + S-adenosyl-L-homocysteine + H(+). Its function is as follows. Dual-specificity methyltransferase that catalyzes the formation of 5-methyluridine at position 54 (m5U54) in all tRNAs, and that of position 341 (m5U341) in tmRNA (transfer-mRNA). In Saccharophagus degradans (strain 2-40 / ATCC 43961 / DSM 17024), this protein is tRNA/tmRNA (uracil-C(5))-methyltransferase.